A 58-amino-acid chain; its full sequence is Large ribosomal subunit protein bL32 (58 aa).

The protein belongs to the bacterial ribosomal protein bL32 family.

The protein is Large ribosomal subunit protein bL32 of Anaplasma marginale (strain Florida).